The sequence spans 393 residues: NAD(P)H-quinone oxidoreductase subunit H, chloroplastic (393 aa).

The protein belongs to the complex I 49 kDa subunit family. As to quaternary structure, NDH is composed of at least 16 different subunits, 5 of which are encoded in the nucleus.

The protein localises to the plastid. Its subcellular location is the chloroplast thylakoid membrane. It carries out the reaction a plastoquinone + NADH + (n+1) H(+)(in) = a plastoquinol + NAD(+) + n H(+)(out). The catalysed reaction is a plastoquinone + NADPH + (n+1) H(+)(in) = a plastoquinol + NADP(+) + n H(+)(out). Its function is as follows. NDH shuttles electrons from NAD(P)H:plastoquinone, via FMN and iron-sulfur (Fe-S) centers, to quinones in the photosynthetic chain and possibly in a chloroplast respiratory chain. The immediate electron acceptor for the enzyme in this species is believed to be plastoquinone. Couples the redox reaction to proton translocation, and thus conserves the redox energy in a proton gradient. The protein is NAD(P)H-quinone oxidoreductase subunit H, chloroplastic of Ipomoea purpurea (Common morning glory).